The primary structure comprises 277 residues: MEMO1 family protein TM_0087 (277 aa).

It belongs to the MEMO1 family.

The sequence is that of MEMO1 family protein TM_0087 from Thermotoga maritima (strain ATCC 43589 / DSM 3109 / JCM 10099 / NBRC 100826 / MSB8).